A 211-amino-acid polypeptide reads, in one-letter code: N-(5'-phosphoribosyl)anthranilate isomerase (211 aa).

The protein belongs to the TrpF family.

The catalysed reaction is N-(5-phospho-beta-D-ribosyl)anthranilate = 1-(2-carboxyphenylamino)-1-deoxy-D-ribulose 5-phosphate. The protein operates within amino-acid biosynthesis; L-tryptophan biosynthesis; L-tryptophan from chorismate: step 3/5. This Pseudomonas aeruginosa (strain LESB58) protein is N-(5'-phosphoribosyl)anthranilate isomerase.